Consider the following 375-residue polypeptide: RING-H2 finger protein ATL16 (375 aa).

The disordered stretch occupies residues 1-20; sequence MDLSNRRNPLRDLSFPPPPP. A helical transmembrane segment spans residues 39–59; it reads VAVIGILATAFLLVSYYVFVI. The segment at 138–180 adopts an RING-type; atypical zinc-finger fold; the sequence is CSVCLSEFQDEEKLRIIPNCSHLFHIDCIDVWLQNNANCPLCR. Disordered regions lie at residues 223-266 and 356-375; these read GSDR…DRGG and SFGS…YFEP. The span at 238–257 shows a compositional bias: polar residues; that stretch reads QERSNSGYLLNENTQNSISP.

Belongs to the RING-type zinc finger family. ATL subfamily.

Its subcellular location is the membrane. The enzyme catalyses S-ubiquitinyl-[E2 ubiquitin-conjugating enzyme]-L-cysteine + [acceptor protein]-L-lysine = [E2 ubiquitin-conjugating enzyme]-L-cysteine + N(6)-ubiquitinyl-[acceptor protein]-L-lysine.. The protein operates within protein modification; protein ubiquitination. The protein is RING-H2 finger protein ATL16 (ATL16) of Arabidopsis thaliana (Mouse-ear cress).